The chain runs to 172 residues: Methylated-DNA--protein-cysteine methyltransferase (172 aa).

The active-site Nucleophile; methyl group acceptor is the Cys-142.

Belongs to the MGMT family.

The protein resides in the cytoplasm. The catalysed reaction is a 6-O-methyl-2'-deoxyguanosine in DNA + L-cysteinyl-[protein] = S-methyl-L-cysteinyl-[protein] + a 2'-deoxyguanosine in DNA. It catalyses the reaction a 4-O-methyl-thymidine in DNA + L-cysteinyl-[protein] = a thymidine in DNA + S-methyl-L-cysteinyl-[protein]. In terms of biological role, involved in the cellular defense against the biological effects of O6-methylguanine (O6-MeG) and O4-methylthymine (O4-MeT) in DNA. Repairs the methylated nucleobase in DNA by stoichiometrically transferring the methyl group to a cysteine residue in the enzyme. This is a suicide reaction: the enzyme is irreversibly inactivated. This Pyrococcus abyssi (strain GE5 / Orsay) protein is Methylated-DNA--protein-cysteine methyltransferase.